Reading from the N-terminus, the 105-residue chain is Putative membrane protein insertion efficiency factor (105 aa).

Residues 76–105 (GHPGGVDPVPPGPHETPRKTSTHDDEPPSR) are disordered. Residues 90-105 (ETPRKTSTHDDEPPSR) show a composition bias toward basic and acidic residues.

The protein belongs to the UPF0161 family.

Its subcellular location is the cell inner membrane. Could be involved in insertion of integral membrane proteins into the membrane. The protein is Putative membrane protein insertion efficiency factor of Chromohalobacter salexigens (strain ATCC BAA-138 / DSM 3043 / CIP 106854 / NCIMB 13768 / 1H11).